Consider the following 643-residue polypeptide: Phosphomethylpyrimidine synthase (643 aa).

Substrate contacts are provided by residues Asn248, Met277, Tyr306, His342, 362–364 (SRG), 403–406 (DGLR), and Glu442. Residue His446 participates in Zn(2+) binding. Substrate is bound at residue Tyr469. Residue His510 participates in Zn(2+) binding. Residues Cys590, Cys593, and Cys598 each coordinate [4Fe-4S] cluster.

The protein belongs to the ThiC family. In terms of assembly, homodimer. [4Fe-4S] cluster is required as a cofactor.

It carries out the reaction 5-amino-1-(5-phospho-beta-D-ribosyl)imidazole + S-adenosyl-L-methionine = 4-amino-2-methyl-5-(phosphooxymethyl)pyrimidine + CO + 5'-deoxyadenosine + formate + L-methionine + 3 H(+). Its pathway is cofactor biosynthesis; thiamine diphosphate biosynthesis. In terms of biological role, catalyzes the synthesis of the hydroxymethylpyrimidine phosphate (HMP-P) moiety of thiamine from aminoimidazole ribotide (AIR) in a radical S-adenosyl-L-methionine (SAM)-dependent reaction. This is Phosphomethylpyrimidine synthase from Burkholderia pseudomallei (strain 1106a).